Here is a 107-residue protein sequence, read N- to C-terminus: Protein RnfH (107 aa).

Residues 82–107 (ARRKRAEKAKEEGRANKVTGGRPIER) are disordered.

Belongs to the UPF0125 (RnfH) family.

The sequence is that of Protein RnfH from Pseudoalteromonas translucida (strain TAC 125).